The primary structure comprises 349 residues: Probable dual-specificity RNA methyltransferase RlmN (349 aa).

Glu93 (proton acceptor) is an active-site residue. Residues 99–329 (YKHGNTICVS…TTIRREMGSD (231 aa)) form the Radical SAM core domain. Cys106 and Cys334 are disulfide-bonded. Residues Cys113, Cys117, and Cys120 each coordinate [4Fe-4S] cluster. Residues 160–161 (GE), Ser192, 215–217 (SLH), and Asn291 each bind S-adenosyl-L-methionine. The S-methylcysteine intermediate role is filled by Cys334.

It belongs to the radical SAM superfamily. RlmN family. [4Fe-4S] cluster is required as a cofactor.

The protein localises to the cytoplasm. It catalyses the reaction adenosine(2503) in 23S rRNA + 2 reduced [2Fe-2S]-[ferredoxin] + 2 S-adenosyl-L-methionine = 2-methyladenosine(2503) in 23S rRNA + 5'-deoxyadenosine + L-methionine + 2 oxidized [2Fe-2S]-[ferredoxin] + S-adenosyl-L-homocysteine. It carries out the reaction adenosine(37) in tRNA + 2 reduced [2Fe-2S]-[ferredoxin] + 2 S-adenosyl-L-methionine = 2-methyladenosine(37) in tRNA + 5'-deoxyadenosine + L-methionine + 2 oxidized [2Fe-2S]-[ferredoxin] + S-adenosyl-L-homocysteine. In terms of biological role, specifically methylates position 2 of adenine 2503 in 23S rRNA and position 2 of adenine 37 in tRNAs. The polypeptide is Probable dual-specificity RNA methyltransferase RlmN (Clostridium tetani (strain Massachusetts / E88)).